We begin with the raw amino-acid sequence, 57 residues long: Potassium channel toxin alpha-KTx 8.8 (57 aa).

The N-terminal stretch at M1–T19 is a signal peptide. Residues I20–V28 constitute a propeptide that is removed on maturation. Intrachain disulfides connect C31-C47, C34-C52, and C38-C54.

Belongs to the short scorpion toxin superfamily. Potassium channel inhibitor family. Alpha-KTx 08 subfamily. In terms of processing, contains 3 disulfide bonds. In terms of tissue distribution, expressed by the venom gland.

It localises to the secreted. Selectively inhibits voltage-gated potassium channels rKv1.2/KCNA2 (IC(50)=331 nM) and hKv1.3/KCNA3 (IC(50)=503 nM). Partially inihibts rKv1.6/KCNA6 (IC(50)=9983 nM). This Orthochirus scrobiculosus (Central Asian scorpion) protein is Potassium channel toxin alpha-KTx 8.8.